The following is a 241-amino-acid chain: Uridylate kinase (241 aa).

15-18 (KLSG) provides a ligand contact to ATP. The interval 23–28 (GAEGFG) is involved in allosteric activation by GTP. G57 serves as a coordination point for UMP. Residues G58 and R62 each coordinate ATP. UMP is bound by residues D77 and 138 to 145 (TGNPFFTT). Positions 165, 171, and 174 each coordinate ATP.

The protein belongs to the UMP kinase family. As to quaternary structure, homohexamer.

The protein resides in the cytoplasm. It carries out the reaction UMP + ATP = UDP + ADP. The protein operates within pyrimidine metabolism; CTP biosynthesis via de novo pathway; UDP from UMP (UMPK route): step 1/1. Allosterically activated by GTP. Inhibited by UTP. Functionally, catalyzes the reversible phosphorylation of UMP to UDP. This chain is Uridylate kinase, found in Sodalis glossinidius (strain morsitans).